The sequence spans 234 residues: Probable chemoreceptor glutamine deamidase CheD (234 aa).

Belongs to the CheD family.

It catalyses the reaction L-glutaminyl-[protein] + H2O = L-glutamyl-[protein] + NH4(+). In terms of biological role, probably deamidates glutamine residues to glutamate on methyl-accepting chemotaxis receptors (MCPs), playing an important role in chemotaxis. The sequence is that of Probable chemoreceptor glutamine deamidase CheD from Burkholderia pseudomallei (strain 1710b).